The sequence spans 335 residues: ATP-dependent 6-phosphofructokinase (335 aa).

Residue Gly-11 coordinates ATP. An ADP-binding site is contributed by 21–25 (RAVVR). ATP is bound by residues 72–73 (RY) and 102–105 (GDGS). Position 103 (Asp-103) interacts with Mg(2+). A substrate-binding site is contributed by 125–127 (TID). The Proton acceptor role is filled by Asp-127. An ADP-binding site is contributed by Arg-154. Substrate contacts are provided by residues Arg-162 and 169 to 171 (MGR). ADP-binding positions include 185-187 (GAD) and 213-215 (KKH). Residues Glu-222, Arg-244, and 250–253 (HIQR) contribute to the substrate site.

The protein belongs to the phosphofructokinase type A (PFKA) family. ATP-dependent PFK group I subfamily. Prokaryotic clade 'B1' sub-subfamily. Homotetramer. The cofactor is Mg(2+).

The protein localises to the cytoplasm. It catalyses the reaction beta-D-fructose 6-phosphate + ATP = beta-D-fructose 1,6-bisphosphate + ADP + H(+). Its pathway is carbohydrate degradation; glycolysis; D-glyceraldehyde 3-phosphate and glycerone phosphate from D-glucose: step 3/4. Allosterically activated by ADP and other diphosphonucleosides, and allosterically inhibited by phosphoenolpyruvate. In terms of biological role, catalyzes the phosphorylation of D-fructose 6-phosphate to fructose 1,6-bisphosphate by ATP, the first committing step of glycolysis. This is ATP-dependent 6-phosphofructokinase from Streptococcus pneumoniae (strain ATCC BAA-255 / R6).